The primary structure comprises 696 residues: Probable transporter efuK (696 aa).

Residues 603-642 form a disordered region; the sequence is SLNGGKMQGASDAKSKVEQGQRAMRKQDEQNGSKWEPVFF. A compositionally biased stretch (basic and acidic residues) spans 615–633; it reads AKSKVEQGQRAMRKQDEQN.

Belongs to the OSBP family.

Its function is as follows. Probable transporter; part of the gene cluster that mediates the biosynthesis of enfumafungin, a glycosylated fernene-type triterpenoid with potent antifungal activity, mediated by its interaction with beta-1,3-glucan synthase and the fungal cell wall. Might be involved in transport of enfumafungin to and across organelle membranes. The polypeptide is Probable transporter efuK (Hormonema carpetanum).